Reading from the N-terminus, the 378-residue chain is Protein RecA (378 aa).

79 to 86 (GPESSGKT) provides a ligand contact to ATP.

It belongs to the RecA family.

The protein resides in the cytoplasm. Its function is as follows. Can catalyze the hydrolysis of ATP in the presence of single-stranded DNA, the ATP-dependent uptake of single-stranded DNA by duplex DNA, and the ATP-dependent hybridization of homologous single-stranded DNAs. It interacts with LexA causing its activation and leading to its autocatalytic cleavage. The protein is Protein RecA of Streptococcus pyogenes serotype M2 (strain MGAS10270).